A 220-amino-acid polypeptide reads, in one-letter code: Large ribosomal subunit protein uL6c (220 aa).

A chloroplast-targeting transit peptide spans 1–38; sequence MSLPLPSHMKSVFLGMKVEISTSVPVTRIGFWRKSVDC.

In terms of assembly, component of the chloroplast large ribosomal subunit (LSU). Mature 70S chloroplast ribosomes of higher plants consist of a small (30S) and a large (50S) subunit. The 30S small subunit contains 1 molecule of ribosomal RNA (16S rRNA) and 24 different proteins. The 50S large subunit contains 3 rRNA molecules (23S, 5S and 4.5S rRNA) and 33 different proteins.

The protein resides in the plastid. It is found in the chloroplast. Its function is as follows. Component of the chloroplast ribosome (chloro-ribosome), a dedicated translation machinery responsible for the synthesis of chloroplast genome-encoded proteins, including proteins of the transcription and translation machinery and components of the photosynthetic apparatus. The chain is Large ribosomal subunit protein uL6c (RPL6) from Spinacia oleracea (Spinach).